The primary structure comprises 714 residues: Polyribonucleotide nucleotidyltransferase (714 aa).

The Mg(2+) site is built by Asp489 and Asp495. The KH domain occupies Pro556–Ile615. The S1 motif domain occupies Gly625 to Lys693. A disordered region spans residues Ser691 to Asp714. A compositionally biased stretch (basic and acidic residues) spans Pro700–Asp714.

This sequence belongs to the polyribonucleotide nucleotidyltransferase family. Mg(2+) is required as a cofactor.

The protein localises to the cytoplasm. It carries out the reaction RNA(n+1) + phosphate = RNA(n) + a ribonucleoside 5'-diphosphate. Functionally, involved in mRNA degradation. Catalyzes the phosphorolysis of single-stranded polyribonucleotides processively in the 3'- to 5'-direction. The protein is Polyribonucleotide nucleotidyltransferase of Streptococcus equi subsp. zooepidemicus (strain MGCS10565).